Here is a 533-residue protein sequence, read N- to C-terminus: Apolipoprotein N-acyltransferase (533 aa).

The next 5 membrane-spanning stretches (helical) occupy residues 17 to 37 (FFLP…WPAV), 72 to 92 (LLFC…GGIL), 116 to 136 (GFRS…WAYM), 165 to 185 (GVWG…LLFM), and 190 to 210 (FQVK…PLLY). The 268-residue stretch at 232–499 (VQPDIDPHEK…QSVLTADVPL (268 aa)) folds into the CN hydrolase domain. The active-site Proton acceptor is the Glu274. The active site involves Lys352. Cys410 acts as the Nucleophile in catalysis. Residues 510-530 (PDLVPHVCLGIAGVLALVAAV) form a helical membrane-spanning segment.

The protein belongs to the CN hydrolase family. Apolipoprotein N-acyltransferase subfamily.

The protein resides in the cell inner membrane. The enzyme catalyses N-terminal S-1,2-diacyl-sn-glyceryl-L-cysteinyl-[lipoprotein] + a glycerophospholipid = N-acyl-S-1,2-diacyl-sn-glyceryl-L-cysteinyl-[lipoprotein] + a 2-acyl-sn-glycero-3-phospholipid + H(+). It functions in the pathway protein modification; lipoprotein biosynthesis (N-acyl transfer). In terms of biological role, catalyzes the phospholipid dependent N-acylation of the N-terminal cysteine of apolipoprotein, the last step in lipoprotein maturation. The chain is Apolipoprotein N-acyltransferase from Chlorobaculum tepidum (strain ATCC 49652 / DSM 12025 / NBRC 103806 / TLS) (Chlorobium tepidum).